The following is a 500-amino-acid chain: Intracellular exo-alpha-(1-&gt;5)-L-arabinofuranosidase (500 aa).

The alpha-L-arabinofuranose site is built by glutamate 28, asparagine 73, and asparagine 173. Glutamate 174 (proton donor/acceptor) is an active-site residue. Residues tyrosine 245, glutamate 293, and glutamine 350 each contribute to the alpha-L-arabinofuranose site. The active-site Nucleophile is the glutamate 293.

Belongs to the glycosyl hydrolase 51 family. As to quaternary structure, homohexamer; trimer of dimers.

It is found in the cytoplasm. The catalysed reaction is Hydrolysis of terminal non-reducing alpha-L-arabinofuranoside residues in alpha-L-arabinosides.. Its pathway is glycan metabolism; L-arabinan degradation. Its function is as follows. Involved in the degradation of arabinan and is a key enzyme in the complete degradation of the plant cell wall. Catalyzes the cleavage of terminal alpha-(1-&gt;5)-arabinofuranosyl bonds in different hemicellulosic homopolysaccharides (branched and debranched arabinans). This is Intracellular exo-alpha-(1-&gt;5)-L-arabinofuranosidase (abfA) from Halalkalibacterium halodurans (strain ATCC BAA-125 / DSM 18197 / FERM 7344 / JCM 9153 / C-125) (Bacillus halodurans).